A 1122-amino-acid chain; its full sequence is Histone deacetylase 5 (1122 aa).

Positions 1–22 (MNSPNESDGMSGREPSLEILPR) are disordered. Lys-35 is covalently cross-linked (Glycyl lysine isopeptide (Lys-Gly) (interchain with G-Cter in SUMO2)). A disordered region spans residues 196-281 (KEPTPGGLNH…KVAERRSSPL (86 aa)). A compositionally biased stretch (basic and acidic residues) spans 247–258 (DSRDDFPLRKTA). Ser-259 bears the Phosphoserine; by AMPK, CaMK1, SIK1 and PKD/PRKD1 mark. A compositionally biased stretch (basic and acidic residues) spans 272–281 (KVAERRSSPL). A Phosphothreonine; by PKC modification is found at Thr-292. 2 disordered regions span residues 302-343 (GAGP…NIPT) and 481-504 (MRTV…LPQS). Residues 312–327 (NSAPGSGPSSPNSSHS) show a composition bias toward low complexity. The span at 328–340 (TIAENGFTGSVPN) shows a compositional bias: polar residues. The span at 494 to 504 (SRTQSSPLPQS) shows a compositional bias: low complexity. Ser-498 bears the Phosphoserine; by AMPK, CaMK1, SIK1 and PKD/PRKD1 mark. An N6-acetyllysine modification is found at Lys-533. The interval 536-625 (TKTGELPRQP…GPDLEEPGAG (90 aa)) is disordered. The segment covering 581–621 (STQEDLEEEDEEEDGEEEEDCIQVKDEEGESGAEEGPDLEE) has biased composition (acidic residues). Phosphoserine is present on residues Ser-611 and Ser-661. The histone deacetylase stretch occupies residues 684–1028 (GVVYDTFMLK…VSALLSVELQ (345 aa)). Residues Cys-696, Cys-698, His-704, and Cys-781 each contribute to the Zn(2+) site. His-833 is a catalytic residue. The Nuclear export signal signature appears at 1081 to 1122 (EEAETVSAMALLSVGAEQAQAAAAREHSPRPAEEPMEQEPAL). The disordered stretch occupies residues 1097–1122 (EQAQAAAAREHSPRPAEEPMEQEPAL). A compositionally biased stretch (basic and acidic residues) spans 1104–1113 (AREHSPRPAE). Ser-1108 bears the Phosphoserine mark.

Belongs to the histone deacetylase family. HD type 2 subfamily. Interacts with AHRR, BAHD1, BCOR, HDAC7, HDAC9, CTBP1, MEF2C, NCOR2, NRIP1, PHB2 and a 14-3-3 chaperone protein. Interacts with BCL6, DDIT3/CHOP, GRK5, KDM5B and MYOCD. Interacts with EP300 in the presence of TFAP2C. Interacts with ANKRA2. Interacts with CUL7 (as part of the 3M complex); negatively regulated by ANKRA2. Interacts with ZBTB7B; the interaction allows the recruitment of HDAC4 on CD8 loci for deacetylation and possible inhibition of CD8 genes expression. Interacts with RARA. Phosphorylated by AMPK, CaMK1, SIK1 and PRKD1 at Ser-259 and Ser-498. The phosphorylation is required for the export to the cytoplasm and inhibition. Phosphorylated by the PKC kinases PKN1 and PKN2, impairing nuclear import. Phosphorylated by GRK5, leading to nuclear export of HDAC5 and allowing MEF2-mediated transcription. Post-translationally, ubiquitinated. Polyubiquitination however does not lead to its degradation.

The protein localises to the nucleus. The protein resides in the cytoplasm. It catalyses the reaction N(6)-acetyl-L-lysyl-[histone] + H2O = L-lysyl-[histone] + acetate. Functionally, responsible for the deacetylation of lysine residues on the N-terminal part of the core histones (H2A, H2B, H3 and H4). Histone deacetylation gives a tag for epigenetic repression and plays an important role in transcriptional regulation, cell cycle progression and developmental events. Histone deacetylases act via the formation of large multiprotein complexes. Involved in muscle maturation by repressing transcription of myocyte enhancer MEF2C. During muscle differentiation, it shuttles into the cytoplasm, allowing the expression of myocyte enhancer factors. Serves as a corepressor of RARA and causes its deacetylation. In association with RARA, plays a role in the repression of microRNA-10a and thereby in the inflammatory response. This Pongo abelii (Sumatran orangutan) protein is Histone deacetylase 5 (HDAC5).